A 493-amino-acid polypeptide reads, in one-letter code: Proline--tRNA ligase (493 aa).

Belongs to the class-II aminoacyl-tRNA synthetase family. ProS type 3 subfamily. In terms of assembly, homodimer.

The protein localises to the cytoplasm. It carries out the reaction tRNA(Pro) + L-proline + ATP = L-prolyl-tRNA(Pro) + AMP + diphosphate. Functionally, catalyzes the attachment of proline to tRNA(Pro) in a two-step reaction: proline is first activated by ATP to form Pro-AMP and then transferred to the acceptor end of tRNA(Pro). This is Proline--tRNA ligase from Parabacteroides distasonis (strain ATCC 8503 / DSM 20701 / CIP 104284 / JCM 5825 / NCTC 11152).